The chain runs to 103 residues: Putative membrane protein insertion efficiency factor (103 aa).

It belongs to the UPF0161 family.

It is found in the cell inner membrane. Its function is as follows. Could be involved in insertion of integral membrane proteins into the membrane. In Chlamydia felis (strain Fe/C-56) (Chlamydophila felis), this protein is Putative membrane protein insertion efficiency factor.